We begin with the raw amino-acid sequence, 413 residues long: Arginine biosynthesis bifunctional protein ArgJ (413 aa).

Residues threonine 158, lysine 184, threonine 195, glutamate 285, asparagine 408, and serine 413 each contribute to the substrate site. The active-site Nucleophile is the threonine 195.

It belongs to the ArgJ family. As to quaternary structure, heterotetramer of two alpha and two beta chains.

The protein localises to the cytoplasm. It carries out the reaction N(2)-acetyl-L-ornithine + L-glutamate = N-acetyl-L-glutamate + L-ornithine. It catalyses the reaction L-glutamate + acetyl-CoA = N-acetyl-L-glutamate + CoA + H(+). The protein operates within amino-acid biosynthesis; L-arginine biosynthesis; L-ornithine and N-acetyl-L-glutamate from L-glutamate and N(2)-acetyl-L-ornithine (cyclic): step 1/1. It participates in amino-acid biosynthesis; L-arginine biosynthesis; N(2)-acetyl-L-ornithine from L-glutamate: step 1/4. In terms of biological role, catalyzes two activities which are involved in the cyclic version of arginine biosynthesis: the synthesis of N-acetylglutamate from glutamate and acetyl-CoA as the acetyl donor, and of ornithine by transacetylation between N(2)-acetylornithine and glutamate. This Rhizobium meliloti (strain 1021) (Ensifer meliloti) protein is Arginine biosynthesis bifunctional protein ArgJ.